The sequence spans 880 residues: DNA mismatch repair protein MutS (880 aa).

625-632 contacts ATP; the sequence is GPNMAGKS.

The protein belongs to the DNA mismatch repair MutS family.

Its function is as follows. This protein is involved in the repair of mismatches in DNA. It is possible that it carries out the mismatch recognition step. This protein has a weak ATPase activity. This chain is DNA mismatch repair protein MutS, found in Alkaliphilus oremlandii (strain OhILAs) (Clostridium oremlandii (strain OhILAs)).